Here is a 430-residue protein sequence, read N- to C-terminus: MEIKKINDQKVQYFFEVSSKELETQLASAYEKIKPKVEIKGFRKGHVPRKIFENRFGKDNLYSDALENIVQTKYQEVLQKKDFESMGMPQVIDLDEKKLKDNQNFTFGLEFIVKPKVTLKKYLGLEITKDDLEVTDYEVEEKINSLLEKQTTLESKTQNDFLELTDIAIFDFEGFVDDKPFEGGTAKDFSLEIGSGQFVPGFEDQMLGMKQGQTKDINITFPSDYHQKSLANQKAVFKVTLHQIKTKKIPQLTDNLVKSLKLVNASTVEELKNNTKQTLLAQKKHKEKENVEKQVIEQLVKNSELEIPQEIVSQEQIRLQKEFEAQLKQQNLTLEQYKQYLGIDDEKMEKEFSQQAQKNIEYQLIMEQVAAQEKLTISQEKIEQKYQNLSNHYKVPVNQIKQNLPEKNLKHSLLMGEALELVINKAVVAK.

The region spanning Thr-165–Pro-250 is the PPIase FKBP-type domain.

The protein belongs to the FKBP-type PPIase family. Tig subfamily.

The protein localises to the cytoplasm. It carries out the reaction [protein]-peptidylproline (omega=180) = [protein]-peptidylproline (omega=0). Its function is as follows. Involved in protein export. Acts as a chaperone by maintaining the newly synthesized protein in an open conformation. Functions as a peptidyl-prolyl cis-trans isomerase. The protein is Trigger factor of Onion yellows phytoplasma (strain OY-M).